Reading from the N-terminus, the 557-residue chain is Tryptophan 2-monooxygenase (557 aa).

Positions 49, 69, 71, 77, and 98 each coordinate FMN. A substrate-binding site is contributed by Arg98.

The protein belongs to the tryptophan 2-monooxygenase family. In terms of assembly, monomer. FMN is required as a cofactor.

The enzyme catalyses L-tryptophan + O2 = indole-3-acetamide + CO2 + H2O. It participates in plant hormone metabolism; auxin biosynthesis. This is Tryptophan 2-monooxygenase (iaaM) from Pseudomonas savastanoi (Pseudomonas syringae pv. savastanoi).